The sequence spans 151 residues: FUN14 domain-containing protein 1A (151 aa).

The YXXL motif lies at 14–17 (YEVL). Helical transmembrane passes span 44–64 (YSVA…GFLF), 71–91 (AATA…GGYI), and 130–150 (FVKK…LGLA).

This sequence belongs to the FUN14 family.

The protein resides in the mitochondrion outer membrane. In terms of biological role, acts as an activator of hypoxia-induced mitophagy, an important mechanism for mitochondrial quality control. In Xenopus laevis (African clawed frog), this protein is FUN14 domain-containing protein 1A (fundc1-a).